A 319-amino-acid chain; its full sequence is Phosphoribosylformylglycinamidine cyclo-ligase (319 aa).

Belongs to the AIR synthase family.

It is found in the cytoplasm. The catalysed reaction is 2-formamido-N(1)-(5-O-phospho-beta-D-ribosyl)acetamidine + ATP = 5-amino-1-(5-phospho-beta-D-ribosyl)imidazole + ADP + phosphate + H(+). The protein operates within purine metabolism; IMP biosynthesis via de novo pathway; 5-amino-1-(5-phospho-D-ribosyl)imidazole from N(2)-formyl-N(1)-(5-phospho-D-ribosyl)glycinamide: step 2/2. In Sulfurisphaera tokodaii (strain DSM 16993 / JCM 10545 / NBRC 100140 / 7) (Sulfolobus tokodaii), this protein is Phosphoribosylformylglycinamidine cyclo-ligase.